The chain runs to 134 residues: Small ribosomal subunit protein uS11 (134 aa).

This sequence belongs to the universal ribosomal protein uS11 family. Part of the 30S ribosomal subunit. Interacts with proteins S7 and S18. Binds to IF-3.

Functionally, located on the platform of the 30S subunit, it bridges several disparate RNA helices of the 16S rRNA. Forms part of the Shine-Dalgarno cleft in the 70S ribosome. The sequence is that of Small ribosomal subunit protein uS11 from Polaromonas sp. (strain JS666 / ATCC BAA-500).